We begin with the raw amino-acid sequence, 538 residues long: Cytochrome c-552 (538 aa).

An N-terminal signal peptide occupies residues 1 to 55 (MKIYLRFVWILIIILNFLLNLFITTNGVIIVNAFKKSLIVAASFASLSLFNSATA). His133 lines the heme c pocket. The heme site is built by Cys161, Cys164, and Lys165. Residues Cys199, Cys202, His203, Cys264, Cys267, and His268 each coordinate heme c. 4 residues coordinate Ca(2+): Glu270, Tyr271, Lys316, and Gln318. Tyr271 contacts substrate. His319 serves as a coordination point for substrate. Residues His330, Cys337, Cys340, His341, His356, Cys369, Cys372, His373, and His448 each contribute to the heme c site.

The protein belongs to the cytochrome c-552 family. Requires Ca(2+) as cofactor. It depends on heme c as a cofactor.

The protein resides in the periplasm. The catalysed reaction is 6 Fe(III)-[cytochrome c] + NH4(+) + 2 H2O = 6 Fe(II)-[cytochrome c] + nitrite + 8 H(+). It participates in nitrogen metabolism; nitrate reduction (assimilation). In terms of biological role, catalyzes the reduction of nitrite to ammonia, consuming six electrons in the process. The polypeptide is Cytochrome c-552 (Haemophilus influenzae (strain 86-028NP)).